The chain runs to 169 residues: Peptide methionine sulfoxide reductase MsrA (169 aa).

Residue Cys10 is part of the active site.

It belongs to the MsrA Met sulfoxide reductase family.

The catalysed reaction is L-methionyl-[protein] + [thioredoxin]-disulfide + H2O = L-methionyl-(S)-S-oxide-[protein] + [thioredoxin]-dithiol. The enzyme catalyses [thioredoxin]-disulfide + L-methionine + H2O = L-methionine (S)-S-oxide + [thioredoxin]-dithiol. Its function is as follows. Has an important function as a repair enzyme for proteins that have been inactivated by oxidation. Catalyzes the reversible oxidation-reduction of methionine sulfoxide in proteins to methionine. This Streptococcus uberis (strain ATCC BAA-854 / 0140J) protein is Peptide methionine sulfoxide reductase MsrA.